The following is a 284-amino-acid chain: Bifunctional protein FolD (284 aa).

Residue 166–168 (GAS) participates in NADP(+) binding.

It belongs to the tetrahydrofolate dehydrogenase/cyclohydrolase family. As to quaternary structure, homodimer.

It catalyses the reaction (6R)-5,10-methylene-5,6,7,8-tetrahydrofolate + NADP(+) = (6R)-5,10-methenyltetrahydrofolate + NADPH. It carries out the reaction (6R)-5,10-methenyltetrahydrofolate + H2O = (6R)-10-formyltetrahydrofolate + H(+). Its pathway is one-carbon metabolism; tetrahydrofolate interconversion. Functionally, catalyzes the oxidation of 5,10-methylenetetrahydrofolate to 5,10-methenyltetrahydrofolate and then the hydrolysis of 5,10-methenyltetrahydrofolate to 10-formyltetrahydrofolate. The polypeptide is Bifunctional protein FolD (Nitrosococcus oceani (strain ATCC 19707 / BCRC 17464 / JCM 30415 / NCIMB 11848 / C-107)).